The sequence spans 220 residues: Germin-like protein subfamily 2 member 4 (220 aa).

The N-terminal stretch at 1–21 (MDSRCFGFFFTLLSLNVIVLA) is a signal peptide. Residues C31 and C46 are joined by a disulfide bond. N-linked (GlcNAc...) asparagine glycosylation is found at N51 and N69. Residues 58 to 209 (FFAGIGKPAV…TFQIGTKEIE (152 aa)) enclose the Cupin type-1 domain. Residues H108, H110, E115, and H154 each contribute to the Mn(2+) site.

The protein belongs to the germin family. In terms of assembly, oligomer (believed to be a pentamer but probably hexamer).

It localises to the secreted. The protein localises to the extracellular space. The protein resides in the apoplast. Functionally, may play a role in plant defense. Probably has no oxalate oxidase activity even if the active site is conserved. This is Germin-like protein subfamily 2 member 4 (GLP10) from Arabidopsis thaliana (Mouse-ear cress).